Here is an 82-residue protein sequence, read N- to C-terminus: uncharacterized protein (82 aa).

Functionally, could be a silencing control element for the regulation of the restriction system. This is an uncharacterized protein from Herpetosiphon aurantiacus (Herpetosiphon giganteus).